Here is a 5082-residue protein sequence, read N- to C-terminus: Malformin synthetase mlfA (5082 aa).

The interval 225–616 (ERHAANRPHS…CGRADTQVKL (392 aa)) is adenylation 1. The region spanning 749 to 822 (SRLEQKIQLA…EAASLAEVQE (74 aa)) is the Carrier 1 domain. Residue Ser783 is modified to O-(pantetheine 4'-phosphoryl)serine. The tract at residues 860–1291 (ENVFPCTTMQ…ALNTLSLLQA (432 aa)) is condensation 1. An adenylation 2 region spans residues 1319 to 1708 (DRWVTRQPEG…GRKDTQVKLR (390 aa)). Positions 1846–1923 (TPTLELERTL…QLAAEVGEPA (78 aa)) constitute a Carrier 2 domain. Ser1883 is subject to O-(pantetheine 4'-phosphoryl)serine. Disordered stretches follow at residues 1924-1953 (GQSASSASSTTEEGFTFSTPDDSSTNDGVD) and 1986-2012 (GGSSSNKTPSVSSSSSSSSSSKRKKNA). 2 stretches are compositionally biased toward low complexity: residues 1926-1950 (SASSASSTTEEGFTFSTPDDSSTND) and 1988-2005 (SSSNKTPSVSSSSSSSSS). The tract at residues 2058-2473 (EDIYPATALQ…AVSCSDKETL (416 aa)) is condensation 2. The interval 2496 to 2888 (RRTPHAPAVC…IGRRDGQLKL (393 aa)) is adenylation 3. The 77-residue stretch at 3024-3100 (RPVTSQEHEM…QLICHLNTIR (77 aa)) folds into the Carrier 3 domain. Ser3061 bears the O-(pantetheine 4'-phosphoryl)serine mark. 2 condensation regions span residues 3117 to 3582 (WVAL…TYDQ) and 3603 to 4022 (NIYP…EHLV). Positions 4047 to 4426 (HNSRQAVFDD…VGRKDNQIKF (380 aa)) are adenylation 4. In terms of domain architecture, Carrier 4 spans 4560–4636 (MPSTAAERKM…DLSDQAKSLI (77 aa)). Ser4597 carries the post-translational modification O-(pantetheine 4'-phosphoryl)serine. The segment at 4673 to 5000 (DVLPTTSFQR…LQTIVQHQNN (328 aa)) is condensation 5.

Belongs to the NRP synthetase family.

Its pathway is secondary metabolite biosynthesis. Functionally, nonribosomal peptide synthetase; part of the gene cluster that mediates the biosynthesis of malformins, cyclic pentapeptides with a disulfide bond between 2 consecutive cysteins, that show potential anti-tumor as well as antimalarial and antitrypanosomal properties. The nonribosomal peptide synthetase mlfA is responsible of the formation of the cyclic pentapeptide. The malformin biosynthesis clusters in malformin-producing fungi also contain enzymes involved in the formation of the disulfide bond between the two consecutive cysteins within malformins, in addition to additional tailoring enzymes such as methyltransferases or oxidoreductases. They are also composed of up to 4 major facilitator superfamily transporters, and transcription factors probably involved in the regulation of the expression of those clusters. In Aspergillus luchuensis (strain CBS 106.47), this protein is Malformin synthetase mlfA.